The sequence spans 313 residues: Ribosomal RNA small subunit methyltransferase H (313 aa).

S-adenosyl-L-methionine contacts are provided by residues 35-37, D55, F80, D102, and Q109; that span reads GGH.

The protein belongs to the methyltransferase superfamily. RsmH family.

The protein localises to the cytoplasm. The enzyme catalyses cytidine(1402) in 16S rRNA + S-adenosyl-L-methionine = N(4)-methylcytidine(1402) in 16S rRNA + S-adenosyl-L-homocysteine + H(+). Functionally, specifically methylates the N4 position of cytidine in position 1402 (C1402) of 16S rRNA. In Shewanella woodyi (strain ATCC 51908 / MS32), this protein is Ribosomal RNA small subunit methyltransferase H.